The following is a 360-amino-acid chain: tRNA-specific 2-thiouridylase MnmA (360 aa).

ATP contacts are provided by residues 9–16 (AMSGGVDS) and L35. The active-site Nucleophile is C104. C104 and C197 are joined by a disulfide. G128 contacts ATP. An interaction with tRNA region spans residues 147–149 (KDQ). The active-site Cysteine persulfide intermediate is C197.

This sequence belongs to the MnmA/TRMU family.

It localises to the cytoplasm. The enzyme catalyses S-sulfanyl-L-cysteinyl-[protein] + uridine(34) in tRNA + AH2 + ATP = 2-thiouridine(34) in tRNA + L-cysteinyl-[protein] + A + AMP + diphosphate + H(+). Functionally, catalyzes the 2-thiolation of uridine at the wobble position (U34) of tRNA, leading to the formation of s(2)U34. The chain is tRNA-specific 2-thiouridylase MnmA from Salinispora arenicola (strain CNS-205).